The sequence spans 167 residues: Large ribosomal subunit protein uL10 (167 aa).

The protein belongs to the universal ribosomal protein uL10 family. As to quaternary structure, part of the ribosomal stalk of the 50S ribosomal subunit. The N-terminus interacts with L11 and the large rRNA to form the base of the stalk. The C-terminus forms an elongated spine to which L12 dimers bind in a sequential fashion forming a multimeric L10(L12)X complex.

Forms part of the ribosomal stalk, playing a central role in the interaction of the ribosome with GTP-bound translation factors. This chain is Large ribosomal subunit protein uL10, found in Lactiplantibacillus plantarum (strain ATCC BAA-793 / NCIMB 8826 / WCFS1) (Lactobacillus plantarum).